The following is a 344-amino-acid chain: tRNA N6-adenosine threonylcarbamoyltransferase (344 aa).

2 residues coordinate Fe cation: His-111 and His-115. Residues Leu-134–Gly-138, Asp-167, Gly-180, and Asn-277 each bind substrate. Residue Asp-305 participates in Fe cation binding.

The protein belongs to the KAE1 / TsaD family. It depends on Fe(2+) as a cofactor.

Its subcellular location is the cytoplasm. The enzyme catalyses L-threonylcarbamoyladenylate + adenosine(37) in tRNA = N(6)-L-threonylcarbamoyladenosine(37) in tRNA + AMP + H(+). Functionally, required for the formation of a threonylcarbamoyl group on adenosine at position 37 (t(6)A37) in tRNAs that read codons beginning with adenine. Is involved in the transfer of the threonylcarbamoyl moiety of threonylcarbamoyl-AMP (TC-AMP) to the N6 group of A37, together with TsaE and TsaB. TsaD likely plays a direct catalytic role in this reaction. The sequence is that of tRNA N6-adenosine threonylcarbamoyltransferase from Glaesserella parasuis serovar 5 (strain SH0165) (Haemophilus parasuis).